Here is a 655-residue protein sequence, read N- to C-terminus: Protein npp-24 (655 aa).

Residues 263 to 283 (ICSVFVLVSGGGVLSHLVVFP) traverse the membrane as a helical segment.

Its subcellular location is the membrane. The sequence is that of Protein npp-24 from Caenorhabditis elegans.